Reading from the N-terminus, the 351-residue chain is Phospho-N-acetylmuramoyl-pentapeptide-transferase (351 aa).

Helical transmembrane passes span Gly3 to Ile23, Thr51 to Val71, Pro76 to Leu96, Gly113 to Phe133, Phe152 to Thr172, Gly181 to Gly201, Pro223 to Phe243, Ile250 to Thr270, Leu275 to Val295, and Phe329 to Met349.

It belongs to the glycosyltransferase 4 family. MraY subfamily. The cofactor is Mg(2+).

The protein resides in the cell membrane. It catalyses the reaction UDP-N-acetyl-alpha-D-muramoyl-L-alanyl-gamma-D-glutamyl-meso-2,6-diaminopimeloyl-D-alanyl-D-alanine + di-trans,octa-cis-undecaprenyl phosphate = di-trans,octa-cis-undecaprenyl diphospho-N-acetyl-alpha-D-muramoyl-L-alanyl-D-glutamyl-meso-2,6-diaminopimeloyl-D-alanyl-D-alanine + UMP. It participates in cell wall biogenesis; peptidoglycan biosynthesis. Functionally, catalyzes the initial step of the lipid cycle reactions in the biosynthesis of the cell wall peptidoglycan: transfers peptidoglycan precursor phospho-MurNAc-pentapeptide from UDP-MurNAc-pentapeptide onto the lipid carrier undecaprenyl phosphate, yielding undecaprenyl-pyrophosphoryl-MurNAc-pentapeptide, known as lipid I. In Thermobifida fusca (strain YX), this protein is Phospho-N-acetylmuramoyl-pentapeptide-transferase.